A 243-amino-acid chain; its full sequence is ATP-dependent dethiobiotin synthetase BioD (243 aa).

12–17 (DVGKTL) lines the ATP pocket. A Mg(2+)-binding site is contributed by T16. The active site involves K37. S41 is a binding site for substrate. Residues D54, 115–118 (EGCG), and 179–180 (NM) each bind ATP. 2 residues coordinate Mg(2+): D54 and E115.

The protein belongs to the dethiobiotin synthetase family. As to quaternary structure, homodimer. Mg(2+) is required as a cofactor.

Its subcellular location is the cytoplasm. The enzyme catalyses (7R,8S)-7,8-diammoniononanoate + CO2 + ATP = (4R,5S)-dethiobiotin + ADP + phosphate + 3 H(+). The protein operates within cofactor biosynthesis; biotin biosynthesis; biotin from 7,8-diaminononanoate: step 1/2. In terms of biological role, catalyzes a mechanistically unusual reaction, the ATP-dependent insertion of CO2 between the N7 and N8 nitrogen atoms of 7,8-diaminopelargonic acid (DAPA, also called 7,8-diammoniononanoate) to form a ureido ring. In Caldicellulosiruptor saccharolyticus (strain ATCC 43494 / DSM 8903 / Tp8T 6331), this protein is ATP-dependent dethiobiotin synthetase BioD.